We begin with the raw amino-acid sequence, 84 residues long: Beta-mammal/insect toxin Ts1 (84 aa).

The N-terminal stretch at 1–20 (MKGMILFISCLLLIGIVVEC) is a signal peptide. The LCN-type CS-alpha/beta domain occupies 21-82 (KEGYLMDHEG…VWDRATNKCG (62 aa)). Intrachain disulfides connect Cys31/Cys81, Cys35/Cys57, Cys43/Cys62, and Cys47/Cys64. Cys81 bears the Cysteine amide mark.

Belongs to the long (4 C-C) scorpion toxin superfamily. Sodium channel inhibitor family. In terms of processing, C-terminal amidation is important for high activity. In terms of tissue distribution, expressed by the venom gland.

The protein localises to the secreted. Voltage-gated sodium channels (Nav) gating-modifier. Acts both as alpha- and beta-toxin, since it affects not only activation but also inactivation of Nav channels. Binds to Nav domain DII and impairs the four Nav channel voltage sensors movements. Depending on Nav channel subtypes tested, can also bind Nav domains DIII (low affinity) and DIV (very low affinity). Acts on almost all the Nav channels tested (mammalian Nav1.2/SCN2A, Nav1.3/SCN3A, Nav1.4/SCN4A, Nav1.5/SCN5A, Nav1.6/SCN8A, Nav1.9/SCN11A, and insect DmNav1). Is highly active against both mammals and insects. Irreversibly modulates DmNav channels. Other Ts1 activities have been studied, such as immunomodulation, antimicrobial activity or exocrine secretion. This toxin exhibits an antifungal activity against filamentous fungi. In vitro, it has an important immunomodulatory effect on macrophages by stimulating the release of pro-inflammatory cytokines. It also shows an activity in exocrine secretion in pancreas, stomach and adrenal gland. This is Beta-mammal/insect toxin Ts1 from Tityus serrulatus (Brazilian scorpion).